The chain runs to 504 residues: Cytochrome P450 3A1 (504 aa).

Cysteine 443 is a heme binding site.

The protein belongs to the cytochrome P450 family. It depends on heme as a cofactor.

Its subcellular location is the endoplasmic reticulum membrane. The protein resides in the microsome membrane. It carries out the reaction an organic molecule + reduced [NADPH--hemoprotein reductase] + O2 = an alcohol + oxidized [NADPH--hemoprotein reductase] + H2O + H(+). Cytochromes P450 are a group of heme-thiolate monooxygenases. In liver microsomes, this enzyme is involved in an NADPH-dependent electron transport pathway. It oxidizes a variety of structurally unrelated compounds, including steroids, fatty acids, and xenobiotics. This chain is Cytochrome P450 3A1 (Cyp3a1), found in Rattus norvegicus (Rat).